The primary structure comprises 500 residues: Oogenesin-3 (500 aa).

One copy of the LRR 1; degenerate repeat lies at 116-143 (RCKLRVLKWRDEQHDFCGIWPGSHEAED). An LRR 2; degenerate repeat occupies 198-222 (HLLCRKLVIETLTKDTVIEIFKIVN). An LRR 3; degenerate repeat occupies 223–248 (ADCIQELELYSLCLEDLAFLNPYLRQ). An LRR 4; degenerate repeat occupies 249–285 (MDNLLELTLDHVTDSLSMGDSEMCEEEMITLVSQLPT). LRR repeat units follow at residues 286–311 (FPCLQKLCVNDVYFIYGNLNEILRCL), 312–343 (KKPLVSFCISNCELSQSDLDCLPYCLNIFELK), 344–367 (CLYLIDIPLNHLCLDPLGFLLESV), 368–395 (RHTLECLELKSCDMGEPQFNALLPALSQ), and 396–420 (CSHLTDVSFWENELSLLFLKQLLQH).

It belongs to the PRAME family. In terms of tissue distribution, expressed in ovary, specifically in oocytes. Detected in follicles with two layers of granulosa cells, and are present in early as well as large antral follicles.

This Mus musculus (Mouse) protein is Oogenesin-3.